Consider the following 245-residue polypeptide: Polyhedrin (245 aa).

The protein belongs to the polyhedrin family.

Its function is as follows. Major component of the virus occlusion bodies, which are large proteinaceous structures (polyhedra), that protect the virus from the outside environment for extended periods until they are ingested by insect larvae. The polypeptide is Polyhedrin (Lepidoptera (butterflies and moths)).